We begin with the raw amino-acid sequence, 149 residues long: D-aminoacyl-tRNA deacylase (149 aa).

The Gly-cisPro motif, important for rejection of L-amino acids motif lies at 137–138; it reads GP.

The protein belongs to the DTD family. As to quaternary structure, homodimer.

It localises to the cytoplasm. It catalyses the reaction glycyl-tRNA(Ala) + H2O = tRNA(Ala) + glycine + H(+). It carries out the reaction a D-aminoacyl-tRNA + H2O = a tRNA + a D-alpha-amino acid + H(+). Functionally, an aminoacyl-tRNA editing enzyme that deacylates mischarged D-aminoacyl-tRNAs. Also deacylates mischarged glycyl-tRNA(Ala), protecting cells against glycine mischarging by AlaRS. Acts via tRNA-based rather than protein-based catalysis; rejects L-amino acids rather than detecting D-amino acids in the active site. By recycling D-aminoacyl-tRNA to D-amino acids and free tRNA molecules, this enzyme counteracts the toxicity associated with the formation of D-aminoacyl-tRNA entities in vivo and helps enforce protein L-homochirality. The sequence is that of D-aminoacyl-tRNA deacylase from Thermotoga petrophila (strain ATCC BAA-488 / DSM 13995 / JCM 10881 / RKU-1).